A 169-amino-acid chain; its full sequence is Mediator of RNA polymerase II transcription subunit 28 (169 aa).

Residues 1 to 35 (MFSAQQPGPPPPNQPGAPAGLMSTPPGAKNPSSTL) are disordered. The stretch at 99-137 (EQVIKEDVSELRNELQRKEALIQKHLTKLRSWQQVLEEI) forms a coiled coil.

This sequence belongs to the Mediator complex subunit 28 family. In terms of assembly, component of the Mediator complex.

It localises to the nucleus. Component of the Mediator complex, a coactivator involved in the regulated transcription of nearly all RNA polymerase II-dependent genes. Mediator functions as a bridge to convey information from gene-specific regulatory proteins to the basal RNA polymerase II transcription machinery. Mediator is recruited to promoters by direct interactions with regulatory proteins and serves as a scaffold for the assembly of a functional preinitiation complex with RNA polymerase II and the general transcription factors. The sequence is that of Mediator of RNA polymerase II transcription subunit 28 (med28) from Xenopus tropicalis (Western clawed frog).